Consider the following 212-residue polypeptide: Adenylate kinase (212 aa).

10–15 (GAGKGT) contributes to the ATP binding site. The NMP stretch occupies residues 30 to 59 (STGDMFRAAIANQTEMGVLAKSYIDKGELV). AMP is bound by residues Thr-31, Arg-36, 57–59 (ELV), 86–89 (GYPR), and Gln-93. The tract at residues 127 to 159 (GRIIHRETGETFHKVFNPPADYKEEDYYQREDD) is LID. Residues Arg-128 and 137–138 (TF) each bind ATP. Arg-156 and Arg-167 together coordinate AMP. Gln-195 is an ATP binding site.

It belongs to the adenylate kinase family. Monomer.

It is found in the cytoplasm. It carries out the reaction AMP + ATP = 2 ADP. Its pathway is purine metabolism; AMP biosynthesis via salvage pathway; AMP from ADP: step 1/1. In terms of biological role, catalyzes the reversible transfer of the terminal phosphate group between ATP and AMP. Plays an important role in cellular energy homeostasis and in adenine nucleotide metabolism. This Streptococcus sanguinis (strain SK36) protein is Adenylate kinase.